Consider the following 226-residue polypeptide: MLKAVFFDIDDTLYDTSGFAKLARKAALNVMIDAGLPLTQEEAYKLLREIISEKGSNYDRHFNVLTKTVFGEEKPLLIALGMITYHNVKFALLRPFPNTTSTLIDLKSKGYRLGVISNGITIKQWEKLIRLGIHHFFDEVVTSDEVGFEKPNIRIFEEALRRMGCKPERSVMVGNKFNEDILGATNAGMSAILVNSELTEAERDHVEKNGLDVTVIDDISQLKEIL.

The protein belongs to the HAD-like hydrolase superfamily. The cofactor is Mg(2+).

Functionally, catalyzes the dephosphorylation of D,L-glyceraldehyde 3-phosphate in vitro. The protein is Glyceraldehyde 3-phosphate phosphatase of Methanothermobacter thermautotrophicus (strain ATCC 29096 / DSM 1053 / JCM 10044 / NBRC 100330 / Delta H) (Methanobacterium thermoautotrophicum).